The sequence spans 67 residues: MRLVVCLVFLASFALVCQGYSSGYTRPLPKPSRPIFIRPIGCDVCYGIPSSTARLCCFRYGDCCHRG.

The N-terminal stretch at 1 to 19 (MRLVVCLVFLASFALVCQG) is a signal peptide. 3 cysteine pairs are disulfide-bonded: C42-C56, C45-C63, and C57-C64. Residue R66 is modified to Arginine amide.

This sequence belongs to the penaeidin family.

The protein localises to the cytoplasmic granule. Antibacterial and antifungal activity. Presents chitin-binding activity. The sequence is that of Penaeidin-4c from Penaeus vannamei (Whiteleg shrimp).